The sequence spans 209 residues: Redox-sensing transcriptional repressor Rex (209 aa).

Positions 16–55 form a DNA-binding region, H-T-H motif; that stretch reads LYYRFIQNLSLSGKQRVSSAELSEAVKVDSATIRRDFSYF. 90 to 95 lines the NAD(+) pocket; sequence GVGNLG.

Belongs to the transcriptional regulatory Rex family. In terms of assembly, homodimer.

The protein resides in the cytoplasm. Functionally, modulates transcription in response to changes in cellular NADH/NAD(+) redox state. The sequence is that of Redox-sensing transcriptional repressor Rex from Bacillus anthracis (strain A0248).